We begin with the raw amino-acid sequence, 362 residues long: Isopentenyl-diphosphate delta-isomerase (362 aa).

6 to 7 (RK) is a substrate binding site. FMN is bound by residues 65–67 (SIT), Ser95, and Asn124. 95–97 (SQR) contacts substrate. Gln158 is a substrate binding site. Glu159 serves as a coordination point for Mg(2+). Residues Lys189, Thr219, 269-271 (GVR), and 290-291 (AL) each bind FMN.

Belongs to the IPP isomerase type 2 family. Homooctamer. Dimer of tetramers. Requires FMN as cofactor. The cofactor is NADPH. It depends on Mg(2+) as a cofactor.

It localises to the cytoplasm. It carries out the reaction isopentenyl diphosphate = dimethylallyl diphosphate. Functionally, involved in the biosynthesis of isoprenoids. Catalyzes the 1,3-allylic rearrangement of the homoallylic substrate isopentenyl (IPP) to its allylic isomer, dimethylallyl diphosphate (DMAPP). This is Isopentenyl-diphosphate delta-isomerase from Methanococcoides burtonii (strain DSM 6242 / NBRC 107633 / OCM 468 / ACE-M).